We begin with the raw amino-acid sequence, 519 residues long: Cytochrome P450 52A12 (519 aa).

Residue cysteine 467 coordinates heme.

Belongs to the cytochrome P450 family. Requires heme as cofactor.

The protein resides in the membrane. Functionally, together with an NADPH cytochrome P450 the enzyme system catalyzes the terminal hydroxylation as the first step in the assimilation of alkanes and fatty acids. This chain is Cytochrome P450 52A12 (CYP52A12), found in Debaryomyces hansenii (Yeast).